A 712-amino-acid polypeptide reads, in one-letter code: Amino-acid acetyltransferase, mitochondrial (712 aa).

A mitochondrion-targeting transit peptide spans Met-1 to Thr-47. A disordered region spans residues Phe-55–Asp-99. Residues Lys-63–Gln-74 are compositionally biased toward basic and acidic residues. Low complexity predominate over residues Pro-81–Glu-93. An N-acetyltransferase domain is found at Gly-534–Pro-702.

Belongs to the acetyltransferase family.

It is found in the mitochondrion. The enzyme catalyses L-glutamate + acetyl-CoA = N-acetyl-L-glutamate + CoA + H(+). It participates in amino-acid biosynthesis; L-arginine biosynthesis; N(2)-acetyl-L-ornithine from L-glutamate: step 1/4. Inhibited by arginine. Functionally, N-acetylglutamate synthase involved in arginine biosynthesis. This is Amino-acid acetyltransferase, mitochondrial (arg-14) from Neurospora crassa (strain ATCC 24698 / 74-OR23-1A / CBS 708.71 / DSM 1257 / FGSC 987).